The following is a 189-amino-acid chain: MQGFFWKTWLVVALCGTSSSLAHRPLSYGEALELALSIYNSKAGEESLFRLLEAVPQPEWDPLSEGSQQLNFTIKETVCQVEEERPLEECGFQEDGVVLECTGYYFFGETPPVVVLTCVPVGGVEEEEEDEEEQKAEVEKDEEKEDEEKDRPKRVKRFKKFFKKLKNSVKKRVKKFFRKPRVIGVTFPF.

Positions 1-22 are cleaved as a signal peptide; sequence MQGFFWKTWLVVALCGTSSSLA. Positions 23–155 are excised as a propeptide; it reads HRPLSYGEAL…DEEKDRPKRV (133 aa). 2 disulfide bridges follow: C79/C90 and C101/C118. The span at 125-148 shows a compositional bias: acidic residues; that stretch reads EEEEEDEEEQKAEVEKDEEKEDEE. Positions 125 to 152 are disordered; sequence EEEEEDEEEQKAEVEKDEEKEDEEKDRP.

It belongs to the cathelicidin family. Expressed by the venom gland.

It is found in the secreted. The protein resides in the target cell membrane. Potent antimicrobial peptide against Gram-negative (MIC=0.25 ug/ml against E.coli ATCC 25922, MIC=1 ug/ml against P.aeruginosa) and Gram-positive bacteria (MIC=32 ug/ml against E.faecalis, MIC=32 ug/ml against S.aureus). Adopts an amphipathic alpha helical conformation, that may allow to partition into the target membrane. Low hemolytic activities have been observed on mammalian cells. In addition, when tested in vitro on the parasite Trypanosoma cruzi (responsible of the Chagas disease), is able to reduce the number of the three forms (epimastigote, trypomastigote and amastigote) by inducing cell death through necrosis. The chain is Batroxicidin from Bothrops atrox (Barba amarilla).